Reading from the N-terminus, the 562-residue chain is Potassium-transporting ATPase potassium-binding subunit (562 aa).

Transmembrane regions (helical) follow at residues Gly5–Gly25, Ala65–Phe85, Ile135–Phe155, Leu181–Thr201, Ile257–Phe277, Leu283–Tyr303, Phe331–Val351, Leu358–Gly378, Val381–Val401, Ala422–Pro442, Ile486–Ile506, and Phe528–Pro548.

Belongs to the KdpA family. In terms of assembly, the system is composed of three essential subunits: KdpA, KdpB and KdpC.

It localises to the cell membrane. Functionally, part of the high-affinity ATP-driven potassium transport (or Kdp) system, which catalyzes the hydrolysis of ATP coupled with the electrogenic transport of potassium into the cytoplasm. This subunit binds the extracellular potassium ions and delivers the ions to the membrane domain of KdpB through an intramembrane tunnel. The protein is Potassium-transporting ATPase potassium-binding subunit of Alicyclobacillus acidocaldarius subsp. acidocaldarius (strain ATCC 27009 / DSM 446 / BCRC 14685 / JCM 5260 / KCTC 1825 / NBRC 15652 / NCIMB 11725 / NRRL B-14509 / 104-IA) (Bacillus acidocaldarius).